The primary structure comprises 183 residues: Putative 3-methyladenine DNA glycosylase (183 aa).

It belongs to the DNA glycosylase MPG family.

This Rickettsia peacockii (strain Rustic) protein is Putative 3-methyladenine DNA glycosylase.